The sequence spans 218 residues: LOB domain-containing protein 29 (218 aa).

One can recognise an LOB domain in the interval 10–112 (SPCGACKFLR…AELEILKQQA (103 aa)).

The protein belongs to the LOB domain-containing protein family. Expressed in roots.

Involved in lateral root formation. Regulated by the transcriptional activators ARF7 and ARF19. The sequence is that of LOB domain-containing protein 29 (LBD29) from Arabidopsis thaliana (Mouse-ear cress).